We begin with the raw amino-acid sequence, 655 residues long: Interferon-induced GTP-binding protein Mx2 (655 aa).

Residues 1 to 18 (MVLSTEENTGVDSVNLPS) are compositionally biased toward polar residues. The tract at residues 1–28 (MVLSTEENTGVDSVNLPSGETGLGEKDQ) is disordered. The region spanning 60-333 (DLALPAIAVI…LISHICKSLP (274 aa)) is the Dynamin-type G domain. Residues 70 to 77 (GDQSSGKS) form a G1 motif region. 70 to 77 (GDQSSGKS) serves as a coordination point for GTP. The tract at residues 95–97 (VTR) is G2 motif. The tract at residues 171–174 (DLPG) is G3 motif. Residues 171 to 175 (DLPGI) and 240 to 243 (TKPD) each bind GTP. A G4 motif region spans residues 240–243 (TKPD). The interval 272-275 (KCRG) is G5 motif. Residues 542 to 562 (EAEEEKKTKHGTSSSSQSQDL) are disordered. Residues 552–562 (GTSSSSQSQDL) show a composition bias toward low complexity. The 89-residue stretch at 567–655 (MAEIFQHLNA…ARRRLAKFPG (89 aa)) folds into the GED domain.

It belongs to the TRAFAC class dynamin-like GTPase superfamily. Dynamin/Fzo/YdjA family.

The protein localises to the cytoplasm. Functionally, interferon-induced dynamin-like GTPase with antiviral activity against vesicular stomatitis virus (VSV) and Hantaan virus (HNTV). The sequence is that of Interferon-induced GTP-binding protein Mx2 (Mx2) from Mus musculus (Mouse).